The primary structure comprises 545 residues: Glucose-6-phosphate isomerase (545 aa).

Residue glutamate 351 is the Proton donor of the active site. Catalysis depends on residues histidine 382 and lysine 510.

Belongs to the GPI family.

Its subcellular location is the cytoplasm. It catalyses the reaction alpha-D-glucose 6-phosphate = beta-D-fructose 6-phosphate. The protein operates within carbohydrate biosynthesis; gluconeogenesis. It participates in carbohydrate degradation; glycolysis; D-glyceraldehyde 3-phosphate and glycerone phosphate from D-glucose: step 2/4. Catalyzes the reversible isomerization of glucose-6-phosphate to fructose-6-phosphate. This is Glucose-6-phosphate isomerase from Shewanella baltica (strain OS223).